The following is a 308-amino-acid chain: MVASAEADVPPPTMLVKIASAGLSACLADIITFPLDTAKVRLQVQGERPNAPGVKYKGVLGTIATVAKTEGPLKLYGGLPAGIQRQISFASLRIGLYDTVQEYFNAHRKTPATLGNKISAGLMTGCVTVFIGQPTEVAKVRMQAQSSLHWLKPRYSGTYNAYYVIVKTEGFLGLWKGTSLNLTRNVIINCTELVVYDVLKEALVKNNVLADDIPCHLLAALTAGFCTTALASPVDVVKTRFINSPPGYYPHVHNCALNMLQKEGLRAFFKGFVPSFLRLGSWTVIMHVTFEQLKKELMKSRQTVDCAT.

Topologically, residues 1-10 (MVASAEADVP) are mitochondrial intermembrane. A helical membrane pass occupies residues 11-33 (PPTMLVKIASAGLSACLADIITF). Solcar repeat units lie at residues 11-103 (PPTM…VQEY), 112-202 (ATLG…LKEA), and 211-296 (DDIP…LKKE). Topologically, residues 34–74 (PLDTAKVRLQVQGERPNAPGVKYKGVLGTIATVAKTEGPLK) are mitochondrial matrix. Lys57 is a fatty acid 16:0 binding site. A helical membrane pass occupies residues 75–97 (LYGGLPAGIQRQISFASLRIGLY). Over 98–117 (DTVQEYFNAHRKTPATLGNK) the chain is Mitochondrial intermembrane. The chain crosses the membrane as a helical span at residues 118-134 (ISAGLMTGCVTVFIGQP). Over 135–179 (TEVAKVRMQAQSSLHWLKPRYSGTYNAYYVIVKTEGFLGLWKGTS) the chain is Mitochondrial matrix. A helical membrane pass occupies residues 180-196 (LNLTRNVIINCTELVVY). The Mitochondrial intermembrane portion of the chain corresponds to 197–213 (DVLKEALVKNNVLADDI). The chain crosses the membrane as a helical span at residues 214–233 (PCHLLAALTAGFCTTALASP). Over 234–267 (VDVVKTRFINSPPGYYPHVHNCALNMLQKEGLRA) the chain is Mitochondrial matrix. Cys255 bears the Cysteine sulfenic acid (-SOH) mark. A helical transmembrane segment spans residues 268–290 (FFKGFVPSFLRLGSWTVIMHVTF). Lys270 lines the fatty acid 16:0 pocket. Over 291 to 308 (EQLKKELMKSRQTVDCAT) the chain is Mitochondrial intermembrane.

This sequence belongs to the mitochondrial carrier (TC 2.A.29) family. In terms of assembly, most probably functions as a monomer. Binds one purine nucleotide per monomer. However, has also been suggested to function as a homodimer or a homotetramer. Tightly associates with cardiolipin in the mitochondrion inner membrane; may stabilize and regulate its activity. Post-translationally, may undergo sulfenylation upon cold exposure. May increase the sensitivity of UCP1 thermogenic function to the activation by noradrenaline probably through structural effects. May undergo ubiquitin-mediated proteasomal degradation. In terms of tissue distribution, brown adipose tissue.

The protein localises to the mitochondrion inner membrane. The enzyme catalyses H(+)(in) = H(+)(out). Has no constitutive proton transporter activity and has to be activated by long-chain fatty acids/LCFAs. Inhibited by purine nucleotides. Both purine nucleotides and LCFAs bind the cytosolic side of the transporter and directly compete to activate or inhibit it. Activated by noradrenaline and reactive oxygen species. Despite lacking canonical translational encoding for selenocysteine, a small pool of the protein has been observed to selectively incorporate selenocysteine at 'Cys-255'. Selenocysteine-modified protein is highly sensitive to redox modification and may constitute a pool of protein highly sensitive to activation by elevated levels of reactive oxygen species (ROS). In terms of biological role, mitochondrial protein responsible for thermogenic respiration, a specialized capacity of brown adipose tissue and beige fat that participates in non-shivering adaptive thermogenesis to temperature and diet variations and more generally to the regulation of energy balance. Functions as a long-chain fatty acid/LCFA and proton symporter, simultaneously transporting one LCFA and one proton through the inner mitochondrial membrane. However, LCFAs remaining associated with the transporter via their hydrophobic tails, it results in an apparent transport of protons activated by LCFAs. Thereby, dissipates the mitochondrial proton gradient and converts the energy of substrate oxydation into heat instead of ATP. Regulates the production of reactive oxygen species/ROS by mitochondria. This is Mitochondrial brown fat uncoupling protein 1 from Suncus murinus (Asian house shrew).